Reading from the N-terminus, the 100-residue chain is uncharacterized protein (100 aa).

Residues 1 to 86 are disordered; it reads MRGTRRGPSG…RHRPPEVTEP (86 aa). The span at 35–48 shows a compositional bias: pro residues; the sequence is DTPPPRAPPPPPPL.

This is an uncharacterized protein from Human herpesvirus 6A (strain Uganda-1102) (HHV-6 variant A).